We begin with the raw amino-acid sequence, 618 residues long: Chaperone protein HscA homolog (618 aa).

It belongs to the heat shock protein 70 family.

In terms of biological role, chaperone involved in the maturation of iron-sulfur cluster-containing proteins. Has a low intrinsic ATPase activity which is markedly stimulated by HscB. This is Chaperone protein HscA homolog from Variovorax paradoxus (strain S110).